The sequence spans 294 residues: Ribosomal RNA small subunit methyltransferase A (294 aa).

The S-adenosyl-L-methionine site is built by asparagine 31, leucine 33, glycine 58, glutamate 79, aspartate 111, and asparagine 136.

This sequence belongs to the class I-like SAM-binding methyltransferase superfamily. rRNA adenine N(6)-methyltransferase family. RsmA subfamily.

Its subcellular location is the cytoplasm. The enzyme catalyses adenosine(1518)/adenosine(1519) in 16S rRNA + 4 S-adenosyl-L-methionine = N(6)-dimethyladenosine(1518)/N(6)-dimethyladenosine(1519) in 16S rRNA + 4 S-adenosyl-L-homocysteine + 4 H(+). Functionally, specifically dimethylates two adjacent adenosines (A1518 and A1519) in the loop of a conserved hairpin near the 3'-end of 16S rRNA in the 30S particle. May play a critical role in biogenesis of 30S subunits. This chain is Ribosomal RNA small subunit methyltransferase A, found in Lactobacillus helveticus (strain DPC 4571).